Consider the following 125-residue polypeptide: uncharacterized protein (125 aa).

This is an uncharacterized protein from Mycobacterium bovis (strain ATCC BAA-935 / AF2122/97).